A 775-amino-acid polypeptide reads, in one-letter code: Metal transporter CNNM4 (775 aa).

Over 1-178 (MAPVGGGGRP…LLFMVEEPGR (178 aa)) the chain is Extracellular. N-linked (GlcNAc...) asparagine glycosylation is found at Asn-85 and Asn-122. A CNNM transmembrane domain is found at 178–358 (RFLPLWLHIL…EPYNDLVKEE (181 aa)). Residues 179 to 199 (FLPLWLHILLITVLLVLSGIF) form a helical membrane-spanning segment. Residues 200–240 (SGLNLGLMALDPMELRIVQNCGTEKERRYARKIEPIRRKGN) are Cytoplasmic-facing. The segment at residues 241–261 (YLLCSLLLGNVLVNTSLTILL) is an intramembrane region (helical). The Cytoplasmic portion of the chain corresponds to 262 to 264 (DNL). Residues 265–285 (IGSGLMAVASSTIGIVIFGEI) traverse the membrane as a helical segment. At 286-293 (LPQALCSR) the chain is on the extracellular side. Residues 294-316 (HGLAVGANTILLTKFFMLLTFPL) form a helical membrane-spanning segment. Residues 317-775 (SFPISKLLDF…LHKASHENAI (459 aa)) lie on the Cytoplasmic side of the membrane. 2 CBS domains span residues 377-438 (MTQL…CTPL) and 445-511 (YNHP…ILDE). A phosphoserine mark is found at Ser-660, Ser-664, and Ser-770.

The protein belongs to the ACDP family. In terms of assembly, interacts with COX11. Widely expressed. Highly expressed in heart.

It localises to the cell membrane. In terms of biological role, probable metal transporter. The interaction with the metal ion chaperone COX11 suggests that it may play a role in sensory neuron functions. May play a role in biomineralization and retinal function. This Homo sapiens (Human) protein is Metal transporter CNNM4 (CNNM4).